The sequence spans 202 residues: Transcription factor IBH1 (202 aa).

Pro residues predominate over residues 1–16 (MDAKRTPPPPTPPNPN). The tract at residues 1–33 (MDAKRTPPPPTPPNPNPSVIGSGAAADGGGFGR) is disordered. In terms of domain architecture, bHLH spans 136–185 (TSAAARAVPPPPRQQGEPPRADALRRLVPGGAGMEYSSLLEETADYLRSL).

It belongs to the bHLH protein family. As to quaternary structure, interacts with ILI1.

Atypical and probable non DNA-binding bHLH transcription factor that acts as a negative regulator of cell elongation and plant development. Binds the transcription factor ILI1 and forms a heterodimer of antagonistic bHLH transcription factors that function downstream of BZR1 to mediate brassinosteroid regulation of cell elongation and lamina inclination. The polypeptide is Transcription factor IBH1 (IBH1) (Oryza sativa subsp. indica (Rice)).